A 30-amino-acid polypeptide reads, in one-letter code: Toxic protein AapA1 (30 aa).

This sequence belongs to the AapA toxin family.

It is found in the cell inner membrane. With respect to regulation, transcription of the aapA1 gene generates a full-length transcript whose folding impedes translation. Processing of the 3' end of the aapA1 message generates a shorter transcript that becomes translatable after a structural rearrangement. The processing also makes it more susceptible to forming dsRNA with IsoA1 which leads to duplex RNA degradation by RNase 3 (rnc). Its function is as follows. May be involved in response to oxidative stress. Toxic component of a type I toxin-antitoxin (TA) system. When overexpression is induced in situ in the absence of its cognate antisense RNA antitoxin IsoA1 it leads to cell growth arrest and cell death without lysis. Neutralized by IsoA1 RNA which forms an extensive duplex with the mRNA. Binds artificial prokaryotic and eukaryotic lipid membranes, with 30-fold higher affinity for prokaryotic membranes. Molecular dynamics suggests the peptide penetrates the membrane leading to lipid reorganization and thinning of the bilayer. Induction of toxin in the absence of antitoxin RNA causes a fast conversion of cells from spiral-shaped to coccoid forms; cells have no visible membrane defects and resemble wild-type 'aging coccoids'. Toxin causes a moderate decrease in membrane potential and ATP content and alterations in peptidoglycan muropeptide abundance; GlcNAc-MurNAc dipeptides increase while GlcNAc-MurNAc tripeptides decrease (i.e. a faster phenocopy of cell aging). Deletion of all 6 AapA/IsoA TA loci in strain B128 leads to slower than wild-type conversion of H2O2-treated cells to the coccoid form. This suggests oxidative stress triggers coccoid transformation via these type I TA systems, although other factors eventually drive the morphology change. The chain is Toxic protein AapA1 from Helicobacter pylori (strain ATCC 700392 / 26695) (Campylobacter pylori).